The sequence spans 266 residues: Glutaconate CoA-transferase subunit B (266 aa).

Glu54 is an active-site residue.

This sequence belongs to the 3-oxoacid CoA-transferase subunit B family. As to quaternary structure, heterooctamer of four A and four B subunits.

Its subcellular location is the cytoplasm. The enzyme catalyses trans-glutaconate + acetyl-CoA = (2E)-glutaconyl-CoA + acetate. It participates in amino-acid degradation; L-glutamate degradation via hydroxyglutarate pathway; crotonoyl-CoA from L-glutamate: step 3/5. Its function is as follows. Catalyzes the transfer of the CoA moiety from acetyl-CoA to (R)-2-hydroxyglutarate and related compounds like glutaconate. The chain is Glutaconate CoA-transferase subunit B (gctB) from Acidaminococcus fermentans (strain ATCC 25085 / DSM 20731 / CCUG 9996 / CIP 106432 / VR4).